Consider the following 191-residue polypeptide: Ribosome hibernation promotion factor (191 aa).

The interval 100-123 (KQRQEGRPEPLPGPAEAEVNAQGS) is disordered.

This sequence belongs to the HPF/YfiA ribosome-associated protein family. Long HPF subfamily. In terms of assembly, interacts with 100S ribosomes.

The protein localises to the cytoplasm. Functionally, required for dimerization of active 70S ribosomes into 100S ribosomes in stationary phase; 100S ribosomes are translationally inactive and sometimes present during exponential growth. The protein is Ribosome hibernation promotion factor of Deinococcus radiodurans (strain ATCC 13939 / DSM 20539 / JCM 16871 / CCUG 27074 / LMG 4051 / NBRC 15346 / NCIMB 9279 / VKM B-1422 / R1).